The sequence spans 268 residues: Undecaprenyl-diphosphatase (268 aa).

A run of 7 helical transmembrane segments spans residues valine 42–leucine 62, alanine 86–leucine 106, valine 108–valine 128, isoleucine 158–glycine 178, alanine 184–leucine 204, leucine 218–valine 238, and phenylalanine 246–leucine 266.

It belongs to the UppP family.

The protein localises to the cell inner membrane. The enzyme catalyses di-trans,octa-cis-undecaprenyl diphosphate + H2O = di-trans,octa-cis-undecaprenyl phosphate + phosphate + H(+). In terms of biological role, catalyzes the dephosphorylation of undecaprenyl diphosphate (UPP). Confers resistance to bacitracin. The chain is Undecaprenyl-diphosphatase from Parvibaculum lavamentivorans (strain DS-1 / DSM 13023 / NCIMB 13966).